The following is a 576-amino-acid chain: MNLLELSEQEIIRRNSMEQLRQMGIEPYPAAEYVTNAFSKEIKETFKDDAEPRPVSIAGRIMSRRIMGKASFMELQDSEGRIQVYISRDDICPDENKDTYNVVFKKLLDIGDFVGIKGFVFRTQMGEISVHAQELTVLSKSLRPLPVVKYKDGVAYDGFNDPELRYRQRYVDLVVNEGVKDIFMKRAAIIKTMRTALDEAGYTEVETPILQSIAGGASARPFITHHNSLDIDLYLRIATELYLKRLIVGGFEGVYEIGKNFRNEGMDRTHNPEFTCMELYVQYKDYNWMMSFTEKLLERICIAVNGTSESTIDGKTISFKAPFRRLPILEAIKEKTGYDLEGKTEDEIRAICKELKMEIDDTMGKGKLIDEIFGEFCEGTFIQPTFIIDYPVEMSPLTKMHRSKPGLTERFELMVNGKELANAYSELNDPIDQEERFKEQLRLSEKGDDEAMFIDQDFLRALQFGMPPTSGIGIGIDRLVMLMTGQTTIQEVLLFPQMRPEKTVKKDNADKYVALGISEEWVPALQKAGYLTVEMLKNANANKLRQELCELNKKYKLELQNPTVQEIEAWIANVGE.

Mg(2+) contacts are provided by Glu-412 and Glu-419.

It belongs to the class-II aminoacyl-tRNA synthetase family. In terms of assembly, homodimer. Requires Mg(2+) as cofactor.

It is found in the cytoplasm. The catalysed reaction is tRNA(Lys) + L-lysine + ATP = L-lysyl-tRNA(Lys) + AMP + diphosphate. The sequence is that of Lysine--tRNA ligase from Parabacteroides distasonis (strain ATCC 8503 / DSM 20701 / CIP 104284 / JCM 5825 / NCTC 11152).